Reading from the N-terminus, the 313-residue chain is Epoxide hydrolase 1 (313 aa).

In terms of domain architecture, AB hydrolase-1 spans 25–299 (PAVLFLHGFP…AAHFINQEKA (275 aa)). The active-site Nucleophile is aspartate 100. An epoxide is bound at residue tyrosine 149. Residue tyrosine 227 is the Proton donor of the active site. The active-site Proton acceptor is the histidine 292.

It belongs to the AB hydrolase superfamily. Epoxide hydrolase family. In terms of assembly, homodimer. As to expression, highly expressed in fruits 15 days after anthesis (15-DAA).

It carries out the reaction an epoxide + H2O = an ethanediol. The catalysed reaction is (24S)-24,25-epoxycucurbitadienol + H2O = (24R)-24,25-dihydroxycucurbitadienol. It participates in secondary metabolite biosynthesis; terpenoid biosynthesis. Epoxide hydrolase involved in the biosynthesis of cucurbitacin and mogroside tetracyclic triterpene natural products (e.g. siamenoside I and mogrosides IV, V and VI). Cucurbitacins have cytotoxic properties and exhibit deterrent taste as a defense barrier against herbivores. Mogrosides are nonsugar highly oxygenated compounds used as high-intensity zero-calorie sweeteners; they also possess pharmacological properties such as regulating immunity, lowering blood sugar and lipid levels, protecting the liver, and acting as antioxidants and antitumor agents. Catalyzes the hydrolysis of aromatic epoxide-containing substrates, such as the conversion of 24,25-epoxycucurbitadienol to 24,25-dihydroxycucurbitadienol. The polypeptide is Epoxide hydrolase 1 (Siraitia grosvenorii (Monk's fruit)).